Consider the following 94-residue polypeptide: MKTLLLTLVVVTILCLDLGLELTNAPDSWSSRRTCLCPAWVPLRSRPVAGHSKQCGSRGRRVDLGCAATCPIVKPGVNINCCSTDNCNPFPKRS.

An N-terminal signal peptide occupies residues 1–19 (MKTLLLTLVVVTILCLDLG). Cystine bridges form between Cys-35-Cys-55, Cys-37-Cys-66, Cys-70-Cys-81, and Cys-82-Cys-87.

Belongs to the three-finger toxin family. Long-chain subfamily. Type II alpha-neurotoxin sub-subfamily. Expressed by the venom gland.

Its subcellular location is the secreted. In terms of biological role, binds with high affinity to muscular nicotinic acetylcholine receptors (nAChRs), whereas it binds with a low affinity to neuronal alpha-7/CHRNA7 nAChRs. In Ophiophagus hannah (King cobra), this protein is Long neurotoxin-like OH-31.